Reading from the N-terminus, the 460-residue chain is MRITNTLTGKKEEFVPIQPGVVRMYVCGPTVYDLIHVGNARPAVVFDVFRRYLEYRGYRVIMVQNFTDIDDKIINKANQLGVDYKTVADTFIAEYWRDAHALGIRPANFHPRTTDFVDDIVEIIERLVEKGVAYQTETGVYFDVRKFEKYGELSKKKIEDLIAGARVEVDETKKFPLDFSLWKKAKPGEPCWKSPWGEGRPGWHIECTVMSVKILGESFDIHAGGEDLVFPHHENEKAQAEALTGKVFARYWMHNGMVRFLGDKMSKSTGNIFTVREAVKRYGRDGLRYMILSKHYRSPMDFSEELLQDYSRAVKRVWEILGRYEKSGDIGIPKRNAVYEEYVNRFVEALDDDFNTPVAVSLIFELARNLSKAMDDNDREDALLYYHLIRREFGPVLGLFDLNEEKKEVSSEELLKLLIEVRDVLRKEKRYDLSDRIRDHLREIGIILKDTPSGTEYTVE.

A Zn(2+)-binding site is contributed by Cys-27. The short motif at 29-39 (PTVYDLIHVGN) is the 'HIGH' region element. Positions 207, 232, and 236 each coordinate Zn(2+). The 'KMSKS' region signature appears at 264 to 268 (KMSKS). Lys-267 is an ATP binding site.

This sequence belongs to the class-I aminoacyl-tRNA synthetase family. Monomer. Requires Zn(2+) as cofactor.

The protein localises to the cytoplasm. The catalysed reaction is tRNA(Cys) + L-cysteine + ATP = L-cysteinyl-tRNA(Cys) + AMP + diphosphate. The sequence is that of Cysteine--tRNA ligase from Thermotoga petrophila (strain ATCC BAA-488 / DSM 13995 / JCM 10881 / RKU-1).